The chain runs to 725 residues: Methionine--tRNA ligase (725 aa).

A 'HIGH' region motif is present at residues 27-37; it reads PYANGQIHIGH. Residues Cys-158, Cys-161, Cys-171, and Cys-174 each contribute to the Zn(2+) site. A 'KMSKS' region motif is present at residues 348 to 352; that stretch reads KMSKS. ATP is bound at residue Lys-351. A tRNA-binding domain is found at 619–725; that stretch reads DFAKIDLRIA…SGAKPGMRVK (107 aa).

The protein belongs to the class-I aminoacyl-tRNA synthetase family. MetG type 1 subfamily. Homodimer. Zn(2+) is required as a cofactor.

It is found in the cytoplasm. The catalysed reaction is tRNA(Met) + L-methionine + ATP = L-methionyl-tRNA(Met) + AMP + diphosphate. Its function is as follows. Is required not only for elongation of protein synthesis but also for the initiation of all mRNA translation through initiator tRNA(fMet) aminoacylation. The chain is Methionine--tRNA ligase from Burkholderia pseudomallei (strain 1710b).